A 92-amino-acid chain; its full sequence is Small ribosomal subunit protein uS19 (92 aa).

Belongs to the universal ribosomal protein uS19 family.

Protein S19 forms a complex with S13 that binds strongly to the 16S ribosomal RNA. In Buchnera aphidicola subsp. Baizongia pistaciae (strain Bp), this protein is Small ribosomal subunit protein uS19.